The chain runs to 406 residues: 2-epi-valiolone synthase (406 aa).

The segment at 1 to 21 is disordered; the sequence is MPSTGSTPILAHDVKSPHRGS. Residues 105–108, 137–141, 161–162, Lys174, Lys183, and 201–204 contribute to the NAD(+) site; these read EPSK, GVLCD, TS, and CLAT. Residues Glu216, His287, and His304 each contribute to the Zn(2+) site.

It belongs to the sugar phosphate cyclases superfamily. EVS family. Requires NAD(+) as cofactor. Co(2+) is required as a cofactor. It depends on Zn(2+) as a cofactor.

It carries out the reaction D-sedoheptulose 7-phosphate = 2-epi-valiolone + phosphate. In terms of biological role, catalyzes the conversion of sedoheptulose 7-phosphate to 2-epi-valiolone, which may serve as an alternative precursor for aminocyclitol biosynthesis. In Stigmatella aurantiaca (strain DW4/3-1), this protein is 2-epi-valiolone synthase.